The chain runs to 1139 residues: MQTPEVPAERSPRRRSISGTSTSEKPNSMDTANTSPFKVPGFFSKRLKGSIKRTKSQSKLDRNTSFRLPSLRSTDDRSRGLPKLKESRSHESLLSPCSTVECLDLGRGEPVSVKPLHSSILGQDFCFEVTYLSGSKCFSCNSASERDKWMENLRRTVQPNKDNCRRAENVLRLWIIEAKDLAPKKKYFCELCLDDTLFARTTSKTKADNIFWGEHFEFFSLPPLHSITVHIYKDVEKKKKKDKNNYVGLVNIPTASVTGRQFVEKWYPVSTPTPNKGKTGGPSIRIKSRFQTITILPMEQYKEFAEFVTSNYTMLCSVLEPVISVRNKEELACALVHILQSTGRAKDFLTDLVMSEVDRCGEHDVLIFRENTIATKSIEEYLKLVGQQYLHDALGEFIKALYESDENCEVDPSKCSSSELIDHQSNLKMCCELAFCKIINSYCVFPRELKEVFASWKQQCLNRGKQDISERLISASLFLRFLCPAIMSPSLFNLMQEYPDDRTSRTLTLIAKVIQNLANFAKFGNKEEYMAFMNDFLEHEWGGMKRFLLEISNPDTISNTPGFDGYIDLGRELSVLHSLLWEVVSQLDKGENSFLQATVAKLGPLPRVLADITKSLTNPTPIQQQLRRFTEHNSSPNVSGSLSSGLQKIFEDPTDSDLHKLKSPSQDNTDSYFRGKTLLLVQQASSQSMTYSEKDERESSLPNGRSVSLMDLQDTHAAQVEHASVMLDVPIRLTGSQLSITQVASIKQLRETQSTPQSAPQVRRPLHPALNQPGGLQPLSFQNPVYHLNNPIPAMPKASIDSSLENLSTASSRSQSNSEDFKLSGPSNSSMEDFTKRSTQSEDFSRRHTVPDRHIPLALPRQNSTGQAQIRKVDQGGLGARAKAPPSLPHSASLRSTGSMSVVSAALVAEPVQNGSRSRQQSSSSRESPVPKVRAIQRQQTQQVQSPVDSATMSPVERTAAWVLNNGQYEEDVEETEQNLDEAKHAEKYEQEITKLKERLRVSSRRLEEYERRLLVQEQQMQKLLLEYKARLEDSEERLRRQQEEKDSQMKSIISRLMAVEEELKKDHAEMQAVIDAKQKIIDAQEKRIVSLDSANTRLMSALTQVKERYSMQVRNGISPTNPTKLSITENGEFKNSSC.

The disordered stretch occupies residues 1–87; sequence MQTPEVPAER…SRGLPKLKES (87 aa). Ser16 carries the phosphoserine modification. Residues 17 to 36 show a composition bias toward polar residues; that stretch reads ISGTSTSEKPNSMDTANTSP. Residues 41–158 enclose the PH domain; sequence GFFSKRLKGS…WMENLRRTVQ (118 aa). The span at 45-56 shows a compositional bias: basic residues; that stretch reads KRLKGSIKRTKS. The span at 73-87 shows a compositional bias: basic and acidic residues; that stretch reads STDDRSRGLPKLKES. Ser89 carries the post-translational modification Phosphoserine. In terms of domain architecture, C2 spans 149 to 267; it reads WMENLRRTVQ…TGRQFVEKWY (119 aa). The Ras-GAP domain maps to 343–551; it reads GRAKDFLTDL…GGMKRFLLEI (209 aa). A Phosphothreonine modification is found at Thr620. Ser663 is subject to Phosphoserine. Disordered regions lie at residues 684–704, 751–782, 803–869, 910–953, and 1116–1139; these read ASSQSMTYSEKDERESSLPNG, ETQSTPQSAPQVRRPLHPALNQPGGLQPLSFQ, SLEN…GQAQ, EPVQ…SATM, and NGISPTNPTKLSITENGEFKNSSC. Polar residues-rich tracts occupy residues 751–760 and 803–818; these read ETQSTPQSAP and SLENLSTASSRSQSNS. The segment covering 833 to 855 has biased composition (basic and acidic residues); it reads DFTKRSTQSEDFSRRHTVPDRHI. Ser864 carries the phosphoserine modification. Residues 916-928 show a composition bias toward low complexity; that stretch reads SRSRQQSSSSRES.

As to quaternary structure, interacts with PEAK1.

Its function is as follows. Inhibitory regulator of the Ras-cyclic AMP pathway. This chain is Ras GTPase-activating protein nGAP (RASAL2), found in Homo sapiens (Human).